The sequence spans 200 residues: Probable nicotinate-nucleotide adenylyltransferase (200 aa).

This sequence belongs to the NadD family.

The enzyme catalyses nicotinate beta-D-ribonucleotide + ATP + H(+) = deamido-NAD(+) + diphosphate. Its pathway is cofactor biosynthesis; NAD(+) biosynthesis; deamido-NAD(+) from nicotinate D-ribonucleotide: step 1/1. In terms of biological role, catalyzes the reversible adenylation of nicotinate mononucleotide (NaMN) to nicotinic acid adenine dinucleotide (NaAD). The protein is Probable nicotinate-nucleotide adenylyltransferase of Clavibacter michiganensis subsp. michiganensis (strain NCPPB 382).